A 269-amino-acid polypeptide reads, in one-letter code: Flagellar hook-basal body complex protein FlhP (269 aa).

Residues 7–65 (TASTTLNQLQQQIDTISSNLSNSNTTGYKAKDTNFSELVRQQFDQVDEKNEEVAKARKT) are a coiled coil.

Belongs to the flagella basal body rod proteins family.

The chain is Flagellar hook-basal body complex protein FlhP (flhP) from Bacillus subtilis (strain 168).